The primary structure comprises 514 residues: Endogenous retrovirus group PABLB member 1 Env polyprotein (514 aa).

An N-linked (GlcNAc...) asparagine glycan is attached at asparagine 58. The interval 60-316 (STSNVFLQWA…YPYLPHVVNQ (257 aa)) is surface protein. The short motif at 82-85 (CWVC) is the CXXC element. Residues asparagine 133, asparagine 140, asparagine 155, asparagine 218, asparagine 226, and asparagine 267 are each glycosylated (N-linked (GlcNAc...) asparagine). The tract at residues 317–514 (GTRAIVHRND…QRDIFHSNAP (198 aa)) is transmembrane protein. Residues 328 to 348 (LPTIFMPSVGLGTVIQHIEAL) are fusion peptide. Residues asparagine 350 and asparagine 357 are each glycosylated (N-linked (GlcNAc...) asparagine). Positions 378–394 (LQNRMALDILTAAEGGT) match the CKS-17 motif. A disulfide bridge links cysteine 395 with cysteine 402. The CX6CC motif lies at 395–403 (CALIKTECC). N-linked (GlcNAc...) asparagine glycosylation is found at asparagine 408 and asparagine 412. The chain crosses the membrane as a helical span at residues 452-472 (ILIVLATLWSVGIALCCGLYF).

This sequence belongs to the gamma type-C retroviral envelope protein family. HERV class-I R(b) env subfamily. Post-translationally, the CXXC motif is highly conserved across a broad range of retroviral envelope proteins. It is thought to participate in the formation of a labile disulfide bond possibly with the CX6CC motif present in the transmembrane domain. Low expression in placenta and testis.

Its subcellular location is the cell membrane. In terms of biological role, retroviral envelope proteins mediate receptor recognition and membrane fusion during early infection. Endogenous envelope proteins may have kept, lost or modified their original function during evolution. This endogenous envelope protein has lost its original fusogenic properties. This is Endogenous retrovirus group PABLB member 1 Env polyprotein (ERVPABLB-1) from Homo sapiens (Human).